A 213-amino-acid polypeptide reads, in one-letter code: Large ribosomal subunit protein mL67 (213 aa).

It belongs to the mitochondrion-specific ribosomal protein mL67 family.

Its subcellular location is the nucleus. It is found in the mitochondrion. Functionally, transcription factor involved in regulation of RNA polymerase II-dependent transcription. Also involved in regulation of mitochondrial DNA recombination, maintenance and repair, and generation of homoplasmic cells. This is Large ribosomal subunit protein mL67 (MHR1) from Eremothecium gossypii (strain ATCC 10895 / CBS 109.51 / FGSC 9923 / NRRL Y-1056) (Yeast).